A 390-amino-acid chain; its full sequence is Neuromedin-B receptor (390 aa).

Residues 1 to 44 are Extracellular-facing; that stretch reads MPPKSLSNLSQTAGVNQSGFFPGASERDFLPATDRTTAEFVIRC. N-linked (GlcNAc...) asparagine glycosylation is found at Asn8 and Asn16. The chain crosses the membrane as a helical span at residues 45–65; the sequence is VIPSLYLLIITVGLLGNIVLV. Topologically, residues 66 to 76 are cytoplasmic; that stretch reads KIFLTNSAMRS. The chain crosses the membrane as a helical span at residues 77-97; it reads VPNIFISNLAAGDVLLLLTCV. The Extracellular portion of the chain corresponds to 98–117; the sequence is PVDASRYFLDEWMFGKVGCK. A disulfide bridge connects residues Cys116 and Cys198. A helical membrane pass occupies residues 118–138; the sequence is LIPVIQLTSVGVSVFTLTALS. The Cytoplasmic segment spans residues 139-155; sequence ADRYRAIVNPMDIQTSG. Residues 156 to 176 form a helical membrane-spanning segment; that stretch reads AVLWTCVKAGGIWVVSVLLAV. The Extracellular segment spans residues 177-210; that stretch reads PEAVFSEVARIDGLDNGSFTACIPYPQTDELHPK. Asn192 is a glycosylation site (N-linked (GlcNAc...) asparagine). The chain crosses the membrane as a helical span at residues 211–231; sequence IHSVLIFLVYFLIPLGIISVY. Over 232-266 the chain is Cytoplasmic; that stretch reads YYHIAKTLIKSAHNLPGEYNEHTKKQMETRKRLAK. Residues 267 to 287 traverse the membrane as a helical segment; that stretch reads IVLVFVGCFVFCWFPNHILYM. The Extracellular segment spans residues 288–305; it reads YRSFNYNEIDPSLGHMIV. A helical transmembrane segment spans residues 306–328; it reads TLVARVLSFCNSCVNPFALYLLS. Over 329–390 the chain is Cytoplasmic; that stretch reads ESFRKHFNNQ…GHSVKQEMAL (62 aa). Cys341 is lipidated: S-palmitoyl cysteine. Ser352 is modified (phosphoserine).

This sequence belongs to the G-protein coupled receptor 1 family. In terms of tissue distribution, highly expressed in peripheral tissues where it is detected in the respiratory system, circulatory system, digestive system, urogenital system, lymphatic organs and endocrine system (at protein level). In the testis, expressed mainly in Leydig cells (at protein level).

It is found in the cell membrane. In terms of biological role, receptor for neuromedin-B. Contributes to the maintenance of basal sigh rate through signaling in the pre-Botzinger complex, a cluster of several thousand neurons in the ventrolateral medulla responsible for inspiration during respiratory activity. Contributes to the induction of sneezing following exposure to chemical irritants or allergens which causes release of NMB by nasal sensory neurons and activation of NMBR-expressing neurons in the sneeze-evoking region of the brainstem. These in turn activate neurons of the caudal ventral respiratory group, giving rise to the sneezing response. Contributes to induction of acute itch, possibly through its activation on dorsal root ganglion neurons by the NMB peptide. Plays a role in the innate immune response to influenza A virus infection by enhancing interferon alpha expression and reducing expression of IL6. Plays a role in CSF1-induced proliferation of osteoclast precursors by contributing to the positive regulation of the expression of the CSF1 receptor CSF1R. This is Neuromedin-B receptor (NMBR) from Sus scrofa (Pig).